The chain runs to 576 residues: Urease subunit alpha (576 aa).

Residues 132–576 (GGIDTHIHFI…LPMAQRYFLF (445 aa)) form the Urease domain. Ni(2+) contacts are provided by H137, H139, and K220. Position 220 is an N6-carboxylysine (K220). H222 lines the substrate pocket. Ni(2+) is bound by residues H249 and H275. H323 acts as the Proton donor in catalysis. Residue D363 participates in Ni(2+) binding.

Belongs to the metallo-dependent hydrolases superfamily. Urease alpha subunit family. As to quaternary structure, heterotrimer of UreA (gamma), UreB (beta) and UreC (alpha) subunits. Three heterotrimers associate to form the active enzyme. Ni cation is required as a cofactor. In terms of processing, carboxylation allows a single lysine to coordinate two nickel ions.

Its subcellular location is the cytoplasm. It catalyses the reaction urea + 2 H2O + H(+) = hydrogencarbonate + 2 NH4(+). It participates in nitrogen metabolism; urea degradation; CO(2) and NH(3) from urea (urease route): step 1/1. The polypeptide is Urease subunit alpha (Paenarthrobacter aurescens (strain TC1)).